The chain runs to 990 residues: Type III restriction-modification enzyme StyLTI Res subunit (990 aa).

Residues 50-545 (NIDVKMETGT…GLRLPVDENG (496 aa)) are helicase-like domain. The region spanning 884–970 (LLKYDYPQQV…RQNINVEFAE (87 aa)) is the VRR-NUC domain. Positions 913–937 (STTPDFVYRIERQDADSVYLLVETK) are endonuclease domain.

Belongs to the type III restriction-modification system Res protein family. As to quaternary structure, contains two different subunits: Res and Mod. Requires Mg(2+) as cofactor. S-adenosyl-L-methionine is required as a cofactor.

It catalyses the reaction Endonucleolytic cleavage of DNA to give specific double-stranded fragments with terminal 5'-phosphates.. In terms of biological role, a type III restriction enzyme that recognizes 2 inversely oriented double-stranded sequences 5'-CAGAG-3' and cleaves DNA 25-27 base pairs downstream. After binding to one recognition site undergoes random one-dimensional diffusion along DNA until it collides with a stationary enzyme bound to the second DNA site, which is when DNA cleavage occurs. DNA restriction requires both the Res and Mod subunits. The sequence is that of Type III restriction-modification enzyme StyLTI Res subunit from Salmonella typhimurium (strain LT2 / SGSC1412 / ATCC 700720).